The following is a 470-amino-acid chain: Zinc finger CCCH domain-containing protein 7 (470 aa).

Residues 122-144 form a disordered region; that stretch reads AYSKKESEKQSGQNNTSTASRNH. Positions 131-142 are enriched in polar residues; it reads QSGQNNTSTASR. 5 consecutive C3H1-type zinc fingers follow at residues 240–269, 273–294, 295–321, 322–349, and 350–372; these read AKKKKYCQFFTRFGKCNKDDGKCPYVHDPS, VCTKFLNGLCANANCKLTHKVI, PERMPDCSYYLQGLCNNEACPYRHVHV, NPIAPICDGFLKGYCSEGDECRKKHSYN, and CPVFEATGSCSQGLKCKLHHPKN. Positions 370–381 are enriched in basic residues; sequence PKNQSKGRKRKR. A disordered region spans residues 370 to 389; the sequence is PKNQSKGRKRKRTNEPSQKN.

In terms of biological role, possesses RNA-binding and ribonuclease activities in vitro. In Arabidopsis thaliana (Mouse-ear cress), this protein is Zinc finger CCCH domain-containing protein 7.